Reading from the N-terminus, the 232-residue chain is Lipopolysaccharide core heptose(II) kinase WaaY (232 aa).

This sequence belongs to the protein kinase superfamily. RfaY/WaaY family.

The catalysed reaction is alpha-D-Glc-(1-&gt;3)-[L-alpha-D-Hep-(1-&gt;7)]-L-alpha-D-Hep-(1-&gt;3)-4-O-PO3(2-)-L-alpha-D-Hep-(1-&gt;5)-[alpha-Kdo-(2-&gt;4)]-alpha-Kdo-(2-&gt;6)-lipid A + ATP = alpha-D-Glc-(1-&gt;3)-[L-alpha-D-Hep-(1-&gt;7)]-4-O-PO3(2-)-L-alpha-D-Hep-(1-&gt;3)-4-O-PO3(2-)-L-alpha-D-Hep-(1-&gt;5)-[alpha-Kdo-(2-&gt;4)]-alpha-Kdo-(2-&gt;6)-lipid A + ADP + H(+). Its pathway is bacterial outer membrane biogenesis; LPS core biosynthesis. Functionally, kinase involved in the biosynthesis of the core oligosaccharide region of lipopolysaccharide (LPS). Catalyzes the phosphorylation of the second heptose unit (HepII) of the inner core. The chain is Lipopolysaccharide core heptose(II) kinase WaaY from Escherichia coli (strain K12).